An 815-amino-acid polypeptide reads, in one-letter code: Ataxin-1 (815 aa).

The span at Met-1 to Glu-41 shows a compositional bias: basic and acidic residues. The disordered stretch occupies residues Met-1 to Ala-63. Residue Lys-16 forms a Glycyl lysine isopeptide (Lys-Gly) (interchain with G-Cter in SUMO) linkage. Positions Asn-49 to Gly-61 are enriched in gly residues. Residues Ser-82 and Ser-88 each carry the phosphoserine modification. Disordered stretches follow at residues Gly-185–Leu-270, Glu-329–Pro-355, and Val-397–Arg-424. A Glycyl lysine isopeptide (Lys-Gly) (interchain with G-Cter in SUMO) cross-link involves residue Lys-194. Residues Gln-197–His-226 are compositionally biased toward low complexity. 2 positions are modified to phosphoserine: Ser-238 and Ser-253. A compositionally biased stretch (polar residues) spans Gln-243–Thr-260. Residues Val-494–Ile-604 form a self-association region. The tract at residues Leu-538–Lys-815 is interaction with USP7. The RNA-binding stretch occupies residues Thr-540–Pro-766. Positions Ser-562 to Gly-693 constitute an AXH domain. Glycyl lysine isopeptide (Lys-Gly) (interchain with G-Cter in SUMO) cross-links involve residues Lys-609, Lys-696, and Lys-745. A disordered region spans residues Glu-762–Leu-798. Ser-775 bears the Phosphoserine mark. The short motif at Pro-794–Ser-797 is the Nuclear localization signal element.

It belongs to the ATXN1 family. As to quaternary structure, homooligomer. Interacts with CIC. Interacts with ANP32A, PQBP1, UBQLN4, ATXN1L and USP7. Directly interacts with RBPJ; this interaction is disrupted in the presence of Notch intracellular domain. Competes with ATXN1L for RBPJ-binding. Found in a complex with CIC and ATXN1L. Post-translationally, ubiquitinated by UBE3A, leading to its degradation by the proteasome. The presence of expanded poly-Gln repeats in spinocerebellar ataxia 1 (SCA1) patients impairs ubiquitination and degradation, leading to accumulation of ATXN1 in neurons and subsequent toxicity. In terms of processing, phosphorylation at Ser-775 increases the pathogenicity of proteins with an expanded polyglutamine tract. Sumoylation is dependent on nuclear localization and phosphorylation at Ser-775. It is reduced in the presence of an expanded polyglutamine tract. Widely expressed throughout the body.

It is found in the cytoplasm. It localises to the nucleus. Functionally, chromatin-binding factor that repress Notch signaling in the absence of Notch intracellular domain by acting as a CBF1 corepressor. Binds to the HEY promoter and might assist, along with NCOR2, RBPJ-mediated repression. Binds RNA in vitro. May be involved in RNA metabolism. In concert with CIC and ATXN1L, involved in brain development. This Homo sapiens (Human) protein is Ataxin-1 (ATXN1).